We begin with the raw amino-acid sequence, 280 residues long: ADNRRPIWVMGHMVNSLAQIDEFVGLGSNSIETDVSFDKQANPEYTYHGIPCDCGRACLHSTKFNDFLKGLRKVTTPGDSKYLEKLILVVFDLKTGSLYDNQAYDAGTKLAKNLLQHYWNNGNNGGRAYIILSIPNLNHYKLITGFKETLKNEGHEELLEKVGTDFSGNDDISDVQKTYNKAGVTGHVWQSDGITNCLLRGLTRVKAAVANRDSGSGIINKVYYWTVDKRQSTRDTLDANVDGIMTNYPDITVEILNEAAYKKKFRIATYEDNPWETFKG.

H12 is an active-site residue. 2 residues coordinate Mg(2+): E32 and D34. The active-site Nucleophile is H48. Intrachain disulfides connect C52/C58 and C54/C197. A Mg(2+)-binding site is contributed by D92.

The protein belongs to the arthropod phospholipase D family. Class II subfamily. It depends on Mg(2+) as a cofactor. In terms of tissue distribution, expressed by the venom gland.

It localises to the secreted. It carries out the reaction an N-(acyl)-sphingosylphosphocholine = an N-(acyl)-sphingosyl-1,3-cyclic phosphate + choline. The enzyme catalyses an N-(acyl)-sphingosylphosphoethanolamine = an N-(acyl)-sphingosyl-1,3-cyclic phosphate + ethanolamine. It catalyses the reaction a 1-acyl-sn-glycero-3-phosphocholine = a 1-acyl-sn-glycero-2,3-cyclic phosphate + choline. The catalysed reaction is a 1-acyl-sn-glycero-3-phosphoethanolamine = a 1-acyl-sn-glycero-2,3-cyclic phosphate + ethanolamine. In terms of biological role, dermonecrotic toxins cleave the phosphodiester linkage between the phosphate and headgroup of certain phospholipids (sphingolipid and lysolipid substrates), forming an alcohol (often choline) and a cyclic phosphate. This toxin acts on sphingomyelin (SM) with high activity. It may also act on ceramide phosphoethanolamine (CPE), lysophosphatidylcholine (LPC) and lysophosphatidylethanolamine (LPE), but not on lysophosphatidylserine (LPS), and lysophosphatidylglycerol (LPG). It acts by transphosphatidylation, releasing exclusively cyclic phosphate products as second products. Induces platelet aggregation in platelet rich plasma, but not in washed platelet, indicating that this activity is dependent on plasma components. Also induces hemolysis. In vivo, the recombinant protein evokes an intense inflammatory reaction and dermonecrosis, similar to those induced by L.gaucho total venom. Is a good immunogen, capable of inducing immunoprotection in test animals. Its function is as follows. Anionic antimicrobial peptide that shows antimicrobial activity against Gram-negative bacteria (MIC=1.15-4.6 uM) (tested on E.coli, P.aeruginosa, and E.cloacae), but not on Gram-negative bacteria (M.luteus, S.aureus, and B.subtilis), neither on fungi and yeasts (A.niger, C.albicans and C.krusei). Does not show hemolytic effects against human erythrocytes, and has no cytotoxic effects against human cervical carcinoma cells (HeLa). The polypeptide is Dermonecrotic toxin LgSicTox-alphaIC1 (Loxosceles gaucho (Spider)).